We begin with the raw amino-acid sequence, 29 residues long: Cytochrome b6-f complex subunit 8 (29 aa).

A helical transmembrane segment spans residues 3–23 (IVNIAWAALMVVSTFSLTLVV).

This sequence belongs to the PetN family. In terms of assembly, the 4 large subunits of the cytochrome b6-f complex are cytochrome b6, subunit IV (17 kDa polypeptide, PetD), cytochrome f and the Rieske protein, while the 4 small subunits are PetG, PetL, PetM and PetN. The complex functions as a dimer.

Its subcellular location is the plastid. It is found in the chloroplast thylakoid membrane. In terms of biological role, component of the cytochrome b6-f complex, which mediates electron transfer between photosystem II (PSII) and photosystem I (PSI), cyclic electron flow around PSI, and state transitions. In Huperzia lucidula (Shining clubmoss), this protein is Cytochrome b6-f complex subunit 8.